The sequence spans 477 residues: Ubiquinone biosynthesis monooxygenase COQ6, mitochondrial (477 aa).

The N-terminal 25 residues, 1-25 (MLGVLRIQGALASAGQARLLSVRLL), are a transit peptide targeting the mitochondrion.

This sequence belongs to the UbiH/COQ6 family. As to quaternary structure, component of a multi-subunit COQ enzyme complex. FAD serves as cofactor.

The protein localises to the mitochondrion inner membrane. The catalysed reaction is a 4-hydroxy-3-(all-trans-polyprenyl)benzoate + 2 reduced [2Fe-2S]-[ferredoxin] + O2 + 2 H(+) = a 3,4-dihydroxy-5-(all-trans-polyprenyl)benzoate + 2 oxidized [2Fe-2S]-[ferredoxin] + H2O. It carries out the reaction a 2-methoxy-6-(all-trans-polyprenyl)phenol + 2 reduced [2Fe-2S]-[ferredoxin] + O2 + 2 H(+) = a 2-methoxy-6-(all-trans-polyprenyl)benzene-1,4-diol + 2 oxidized [2Fe-2S]-[ferredoxin] + H2O. It participates in cofactor biosynthesis; ubiquinone biosynthesis. Its function is as follows. FAD-dependent monooxygenase required for two non-consecutive steps during ubiquinone biosynthesis. Required for the C5-ring hydroxylation during ubiquinone biosynthesis by catalyzing the hydroxylation of 4-hydroxy-3-(all-trans-polyprenyl)benzoic acid to 3,4-dihydroxy-5-(all-trans-polyprenyl)benzoic acid. Also acts downstream of coq4, for the C1-hydroxylation during ubiquinone biosynthesis by catalyzing the hydroxylation of 2-methoxy-6-(all-trans-polyprenyl)phenol to 2-methoxy-6-(all-trans-polyprenyl)benzene-1,4-diol. The electrons required for the hydroxylation reaction are funneled indirectly to Coq6 from NADPH via a ferredoxin/ferredoxin reductase system. In Drosophila melanogaster (Fruit fly), this protein is Ubiquinone biosynthesis monooxygenase COQ6, mitochondrial.